A 543-amino-acid chain; its full sequence is MKRTRSALPANFDPVYPYDAPKPSTQPPFFNDRKGLTESSPGTLAVNISPPLTFSNLGAIKLSTGAGLILKEGKLEANIGPGLTTNQEGQITVEKDSDGLTFTSPLHKIENTVSLSIGEGLEDESGTLKVNFPSPPPPLLFSPPLAEAGGTVSLPLQESMQVTEGKLGVKPTTYSPPLQKTDQQVSLRVGPGLTVLNGQLQAVQPPATTYKEPLLETENSVSLKVGAGLAVQDGALVATPPNVTFSAPLEKNGNAVSVRVGAGLSIQGNALVATTSPTLTFAYPLIKNNNHITLSAGSGLRVSGGSLTVATGPGLSHINGTIAAVIGAGLKFENNAILAKLGNGLTIRDGAIEAVAPQPSFTPVTLWTGPDPNVNASINGTPVIRSFISLTRDSNLVTVNASFTGEGSYQSVSPTQSQFSLILEFNQFGQLMSTGNLNSTTTWGEKPWGNNTVQVQPSHTWKLCMPNREVYSTPAATLTSCGLNSIAHDGAPNRSIDCMLIINKLRGAATYTLTFRFLNFNKLSSSTVFKTDVLTFTYVGENQ.

A disordered region spans residues 1–36 (MKRTRSALPANFDPVYPYDAPKPSTQPPFFNDRKGL).

It belongs to the adenoviridae fiber family. Homotrimer. Interacts (via N-terminal tail region) with pentons.

The protein resides in the virion. The protein localises to the host nucleus. Forms spikes that protrude from each vertex of the icosahedral capsid. Interacts with host receptor to provide virion initial attachment to target cell. Fiber proteins are shed during virus entry, when virus is still at the cell surface. The polypeptide is Fiber protein (Canis lupus familiaris (Dog)).